Reading from the N-terminus, the 242-residue chain is Ribosomal RNA small subunit methyltransferase G (242 aa).

Residues glycine 78, leucine 83, 130-131, and arginine 151 contribute to the S-adenosyl-L-methionine site; that span reads AE.

It belongs to the methyltransferase superfamily. RNA methyltransferase RsmG family.

It is found in the cytoplasm. Specifically methylates the N7 position of guanine in position 518 of 16S rRNA. This Salinispora tropica (strain ATCC BAA-916 / DSM 44818 / JCM 13857 / NBRC 105044 / CNB-440) protein is Ribosomal RNA small subunit methyltransferase G.